A 206-amino-acid chain; its full sequence is FMN-dependent NADH:quinone oxidoreductase 2 (206 aa).

Residue serine 10 participates in FMN binding.

Belongs to the azoreductase type 1 family. In terms of assembly, homodimer. FMN serves as cofactor.

The enzyme catalyses 2 a quinone + NADH + H(+) = 2 a 1,4-benzosemiquinone + NAD(+). The catalysed reaction is N,N-dimethyl-1,4-phenylenediamine + anthranilate + 2 NAD(+) = 2-(4-dimethylaminophenyl)diazenylbenzoate + 2 NADH + 2 H(+). Functionally, quinone reductase that provides resistance to thiol-specific stress caused by electrophilic quinones. In terms of biological role, also exhibits azoreductase activity. Catalyzes the reductive cleavage of the azo bond in aromatic azo compounds to the corresponding amines. This Rhizobium etli (strain ATCC 51251 / DSM 11541 / JCM 21823 / NBRC 15573 / CFN 42) protein is FMN-dependent NADH:quinone oxidoreductase 2.